Consider the following 141-residue polypeptide: Lutropin subunit beta (141 aa).

Positions 1-20 (MEMLQGLLLWLLLNVGGVWA) are cleaved as a signal peptide. Intrachain disulfides connect C29–C77, C43–C92, C46–C130, C54–C108, C58–C110, and C113–C120. An N-linked (GlcNAc...) asparagine glycan is attached at N33.

This sequence belongs to the glycoprotein hormones subunit beta family. Heterodimer of a common alpha chain and a unique beta chain which confers biological specificity to thyrotropin, lutropin, follitropin and gonadotropin.

It is found in the secreted. Promotes spermatogenesis and ovulation by stimulating the testes and ovaries to synthesize steroids. The polypeptide is Lutropin subunit beta (LHB) (Ailurus fulgens (Himalayan red panda)).